Consider the following 2262-residue polypeptide: MKRHQFKSCIFELREILREIKNSRYFLDSWTKFDSVVSFTHIFFHQERFVKLLGPQTWSVLLSRDSQGSTSNRYFTIKGVVLLVVAVLIYRINNRNMVERKNLYLMGLLPIPMNSIGPRNDTLEESFWSPNINRLIVSLLYLPKGKKISESCFMDPKESTWVLPITKKCIMPESNWGSRWWRNWIGKKRDSSCKISNETVAGIEISFKEKDIKYLEFLFVSYMDDPIRKDHGWELFDRVSPRKKRNIINLNSGQLFEILAKHLICYLMSAFREKRPIEVEGFLKQQGAEATIQSNDIEHVSHLFSRNKWDISLQNCAQFHVWQFHQDLFVSWGKNHHESDFLRNVSRENLIWLDNMWLVNKDRFFSKVRNVSSNIQYDSTRSIFVQVTDSSQLKGSSDQSRENFDSISNEDSEYHTLINQTEIQQLKERLILWDPSSLQTERTEIESDRFPKYPSGYSSMSRLFTEREKQMNNHLFPEKIEEFLGNPTRSIRSFFSDRWSELHLVSNATERFARDHKLLKKQQDVFSFVPSRRSEKKEMVDIFKIITYLQNTVSIHPISSDPGCDMVPRDEPDMDSSNKISFLNKNPFCDLFHLFHDRNKGRYTLHHDFESEERFQEMADLFTLSITEPDLVYHKGFAFSMDSYGLDQKKFLNEVFNSRDESKKNSLLVLPHIFYEENESFYRRIRKKWVRISCRNGLEDPKPKIVVFASNNIMEAVNQYRLIRNLIQIQYSTYGYIRNLSNRFSLMNRSDRNFEYGIQRDQIGNDTLNHITIMKYMINQHLSNVKKSQKKWFDPLISRTERSMNRDPNAYRYKWSNGSKNFQEHLEHFVSEQKNRFQVVFDRLRINQHSIDWSKVIDKQDLSKSLHFFLSKSLLFLSKSLTFFFVSIGNIPIHRSEIHIYELKGPNDQLCNQLLESIGVQIVHLNKLKPFLLDDHDTSQRSKFLINGGTISAFLFNKIPKWMIDSLHTRNNRRKFFDNTDSYFSMISHDRDNWLNPVKPFHRSSLISSFYKANLLRFLNNPHHFCFYSNKRFPFYAEKTRIDNYDLTYGQFLHTYGQFLHISFIRNKIFSLCVGKKKHVFLERDTISPIESQVSDIFIPNDFPQSGDETYNLYKSQPLSTYCQPLSDMNLSDSEGKNLHQYLSFNSNMGLIHTPCSEKYLPSAKKRNLCLKKCVEKGQMYRAFQRDSAFSNLSKWNLFQTYMPWFLTSAGCKYINLILLDTFSDPLPILSSSHKFVSFFYDITHGSDISWSILQIPLWAILPQWNLISEISSKCLQNLLLPEEMIHRNNESPVPLKWTHLRSPNAREFLYSILFLLLVAGYLVRTHLLFISRVSSELQTELEKIKSLMIQSYMIELRKLLDRYPPPELNSFWLKNLFLVALEQLGDSLEEIRSSASGGNMLLGGGPTYGVKSIRSKKKDLNINLIDIIYLISIIPNPINPITFSRNTRHLSRTSKEIYSLIRKNVNSDWIDDQIESWVANSDLIDDEEREFLVQFSTLTTEKRIDQILLSLTHSDHLSKNDSGYQMIEQPGSIYLRYLVDIHKKYLMNYEFNRSCLAERRIFLAHYQTITYSQTPCGANSSHFPSHGKPFSLRLALPPSRGILVIGFIGTGRSYFVKYRVTNSYVPFITVFPNKFLDDNKGYLIDDIDIDDSDDIDIDDSDDIDDDLDTELLTMPNVLTMYMTPKIDRFEITLPLELAKAMSPCIIWIPNIHDLYVNESNYLSLGLLVNHLPRDCERCSTRNILVIASTHIPQKVDPALIAPNKSNTCIKIRRLLIPQQRKHFFILSYTRGFRLEKKMSHTNGFGSITMGSNARDLVALTNEVLSISITQKKSIIDTNTIRSALHRQTWDLRSQVRSVQDHEILFYQIGRAVAQNVLLSNCSIDPISIYMKKKSCKEGDSYLSKWYFELGTSMKKLTILLYLLSCSAGSVAQDLWSPPGPDEKNWITSYGFVENDSDLVHGLLESALVGYSRTECSQFDNDRVTLLLRSEPRNQLDMMQNGSCSIVDQRFLYEKYESGFEEGEGEGTLDLQQIEEDEDLFNHIVWAPRLWRPHGNLFDCIERPNKLGFPYWVRSFRGKKIIYHKEDKLQENDSEFLQSGTVQYQTRDRSSKEQGFFRISQFIWDPADQFFFLFKDQPFVSVFSRREFFADEEMSKGLITSQTNPPTSIYKRWLIKNTQEKHFELLIHRQRWLRTNTNSSLSNGSFRSNTLSESYQYLSNLFLSNNGTLLDQMTKTLLRKRWLFPDEMKHLIHAPGERFPIP.

1607–1614 (GFIGTGRS) contributes to the ATP binding site.

Belongs to the Ycf2 family.

Its subcellular location is the plastid. The protein resides in the chloroplast stroma. Its function is as follows. Probable ATPase of unknown function. Its presence in a non-photosynthetic plant (Epifagus virginiana) and experiments in tobacco indicate that it has an essential function which is probably not related to photosynthesis. This chain is Protein Ycf2, found in Nuphar advena (Common spatterdock).